The primary structure comprises 214 residues: MAFFQKLTGQEQVNRDLLLLLCIGGFYALGVSLSNTFVNIYLWKQTGDFRDLALYNLAVVTMQPLTFIVAGRLAKQIDRILVLRLGVSCLAVFFVTVLLVGSRAHQYLLVLGALLGVGYGFYWLAFNVLTFEITEPETRDFFNGFFGVLTSSAGMIGPIAAGYIISSLHGAKGYTFVFLAVARLVSCRCAAQLFLEAPRGRGEIFIFPHFKGTE.

The next 5 helical transmembrane spans lie at 18–38, 51–71, 80–100, 108–128, and 145–165; these read LLLL…NTFV, DLAL…IVAG, ILVL…VLLV, LLVL…AFNV, and FFGV…GYII.

It localises to the cell membrane. This is an uncharacterized protein from Geobacillus stearothermophilus (Bacillus stearothermophilus).